Consider the following 567-residue polypeptide: 2-succinyl-5-enolpyruvyl-6-hydroxy-3-cyclohexene-1-carboxylate synthase (567 aa).

This sequence belongs to the TPP enzyme family. MenD subfamily. In terms of assembly, homodimer. Mg(2+) serves as cofactor. Requires Mn(2+) as cofactor. It depends on thiamine diphosphate as a cofactor.

The catalysed reaction is isochorismate + 2-oxoglutarate + H(+) = 5-enolpyruvoyl-6-hydroxy-2-succinyl-cyclohex-3-ene-1-carboxylate + CO2. The protein operates within quinol/quinone metabolism; 1,4-dihydroxy-2-naphthoate biosynthesis; 1,4-dihydroxy-2-naphthoate from chorismate: step 2/7. Its pathway is quinol/quinone metabolism; menaquinone biosynthesis. Catalyzes the thiamine diphosphate-dependent decarboxylation of 2-oxoglutarate and the subsequent addition of the resulting succinic semialdehyde-thiamine pyrophosphate anion to isochorismate to yield 2-succinyl-5-enolpyruvyl-6-hydroxy-3-cyclohexene-1-carboxylate (SEPHCHC). In Yersinia pseudotuberculosis serotype IB (strain PB1/+), this protein is 2-succinyl-5-enolpyruvyl-6-hydroxy-3-cyclohexene-1-carboxylate synthase.